Consider the following 114-residue polypeptide: Histone H2A.Z-specific chaperone chz-1 (114 aa).

Residues 1–22 (MSTENGTTDTTLAGTAEANTPF) are compositionally biased toward polar residues. Residues 1-114 (MSTENGTTDT…FVPEDEEMEE (114 aa)) form a disordered region. Positions 24 to 40 (SKGKGKAAAESEDHPMG) are enriched in basic and acidic residues. Composition is skewed to acidic residues over residues 41–68 (EAEDDEDDEDEDETEEPEAEEDNLEEID) and 93–114 (PAEEDDEEDDEEFVPEDEEMEE).

It belongs to the CHZ1 family. In terms of assembly, forms a heterotrimer with H2A.Z-H2B, stabilizing the association of the histone dimer. Also, with a lower affinity, forms a heterotrimer with H2A-H2B.

The protein localises to the nucleus. Its function is as follows. Forms a chaperone-bound H2A.Z-H2B complex that acts as a source for SWR1 complex-dependent H2A to H2A.Z histone replacement in chromatin. This chain is Histone H2A.Z-specific chaperone chz-1 (chz-1), found in Neurospora crassa (strain ATCC 24698 / 74-OR23-1A / CBS 708.71 / DSM 1257 / FGSC 987).